Reading from the N-terminus, the 557-residue chain is Formate--tetrahydrofolate ligase (557 aa).

66–73 serves as a coordination point for ATP; the sequence is TPAGEGKS.

The protein belongs to the formate--tetrahydrofolate ligase family.

It carries out the reaction (6S)-5,6,7,8-tetrahydrofolate + formate + ATP = (6R)-10-formyltetrahydrofolate + ADP + phosphate. Its pathway is one-carbon metabolism; tetrahydrofolate interconversion. The chain is Formate--tetrahydrofolate ligase from Lactobacillus johnsonii (strain CNCM I-12250 / La1 / NCC 533).